A 102-amino-acid polypeptide reads, in one-letter code: Cytochrome b (102 aa).

3 helical membrane-spanning segments follow: residues 1–21 (FGSL…FLAM), 45–66 (WLMR…FLHI), and 81–101 (WNIG…GYVL). Residues His51 and His65 each contribute to the heme b site.

This sequence belongs to the cytochrome b family. The cytochrome bc1 complex contains 3 respiratory subunits (MT-CYB, CYC1 and UQCRFS1), 2 core proteins (UQCRC1 and UQCRC2) and probably 6 low-molecular weight proteins. The cofactor is heme b.

The protein resides in the mitochondrion inner membrane. Functionally, component of the ubiquinol-cytochrome c reductase complex (complex III or cytochrome b-c1 complex) that is part of the mitochondrial respiratory chain. The b-c1 complex mediates electron transfer from ubiquinol to cytochrome c. Contributes to the generation of a proton gradient across the mitochondrial membrane that is then used for ATP synthesis. The polypeptide is Cytochrome b (mt-cyb) (Ambystoma tigrinum (Eastern tiger salamander)).